The sequence spans 306 residues: Pantothenate kinase (306 aa).

91–98 is an ATP binding site; that stretch reads GSVAVGKS.

The protein belongs to the prokaryotic pantothenate kinase family.

It is found in the cytoplasm. It carries out the reaction (R)-pantothenate + ATP = (R)-4'-phosphopantothenate + ADP + H(+). It functions in the pathway cofactor biosynthesis; coenzyme A biosynthesis; CoA from (R)-pantothenate: step 1/5. This Streptococcus equi subsp. zooepidemicus (strain H70) protein is Pantothenate kinase.